A 294-amino-acid chain; its full sequence is N-acetylmuramic acid 6-phosphate etherase (294 aa).

Residues 54-217 (VIQSFEEEGR…STASMIGVGK (164 aa)) enclose the SIS domain. E82 functions as the Proton donor in the catalytic mechanism. Residue E113 is part of the active site.

This sequence belongs to the GCKR-like family. MurNAc-6-P etherase subfamily. As to quaternary structure, homodimer.

The enzyme catalyses N-acetyl-D-muramate 6-phosphate + H2O = N-acetyl-D-glucosamine 6-phosphate + (R)-lactate. It functions in the pathway amino-sugar metabolism; N-acetylmuramate degradation. Its function is as follows. Specifically catalyzes the cleavage of the D-lactyl ether substituent of MurNAc 6-phosphate, producing GlcNAc 6-phosphate and D-lactate. The chain is N-acetylmuramic acid 6-phosphate etherase from Bacillus anthracis (strain A0248).